Consider the following 772-residue polypeptide: Cellulosomal-scaffolding protein B (772 aa).

The Cohesin 1 domain occupies 1-80 (DPSKSFDSAI…TTFVAGGVNL (80 aa)). A linker (Pro/Thr-rich) region spans residues 81–93 (GSSVPTTQPNVPS). Residues 94-240 (DGVVVEIGKV…VNVGNATPTK (147 aa)) enclose the Cohesin 2 domain. The segment covering 235-276 (NATPTKGATPTNTATPTKSATATPPGHSVPTNTPTNTPANTP) has biased composition (low complexity). Disordered regions lie at residues 235-277 (NATP…NTPV) and 438-464 (VVPSTQPVTTPPATTKPPATTIPPSDD). The linker (Pro/Thr-rich) stretch occupies residues 241 to 272 (GATPTNTATPTKSATATPPGHSVPTNTPTNTP). Residues 277 to 435 (VSGNLKVEFY…GVLVWGKEPG (159 aa)) form the CBM3 domain. Positions 438-461 (VVPSTQPVTTPPATTKPPATTIPP) are enriched in low complexity. Residues 440 to 461 (PSTQPVTTPPATTKPPATTIPP) form a linker (Pro/Thr-rich) region. In terms of domain architecture, Cohesin 3 spans 462-607 (SDDPNAIKIK…ETDLINGGVL (146 aa)). One can recognise a Dockerin domain in the interval 704–771 (IMMWVGDIVK…FGATSSDYDA (68 aa)).

In terms of processing, O-glycosylated on most but not all Thr residues of the linker units.

It is found in the secreted. Acts as a scaffolding protein in the cellulosome. It promotes binding of cellulose to the catalytic domains of the cellulolytic enzymes probably through the binding of the nine repeated domains with dockerin domains present in catalytic subunits of the cellulosome. The polypeptide is Cellulosomal-scaffolding protein B (cipB) (Acetivibrio thermocellus (Hungateiclostridium thermocellum)).